The following is a 562-amino-acid chain: Glutamate--tRNA ligase (562 aa).

Positions 101–111 (PEPNGYPHIGH) match the 'HIGH' region motif.

The protein belongs to the class-I aminoacyl-tRNA synthetase family. Glutamate--tRNA ligase type 2 subfamily.

It localises to the cytoplasm. The enzyme catalyses tRNA(Glu) + L-glutamate + ATP = L-glutamyl-tRNA(Glu) + AMP + diphosphate. Functionally, catalyzes the attachment of glutamate to tRNA(Glu) in a two-step reaction: glutamate is first activated by ATP to form Glu-AMP and then transferred to the acceptor end of tRNA(Glu). The protein is Glutamate--tRNA ligase of Cenarchaeum symbiosum (strain A).